A 297-amino-acid chain; its full sequence is TATA-box-binding protein (297 aa).

Residues 52 to 116 form a disordered region; that stretch reads EEQQRQQQQA…ITPATPASES (65 aa). 2 stretches are compositionally biased toward low complexity: residues 56–78 and 104–114; these read RQQQ…QTPQ and MTPITPATPAS. Repeat copies occupy residues 123 to 199 and 213 to 290.

This sequence belongs to the TBP family. As to quaternary structure, belongs to the TFIID complex together with the TBP-associated factors (TAFs). Binds DNA as monomer. Post-translationally, the N-terminal domain is extensively phosphorylated.

It is found in the nucleus. Its function is as follows. General transcription factor that functions at the core of the DNA-binding multiprotein factor TFIID. Binding of TFIID to the TATA box is the initial transcriptional step of the pre-initiation complex (PIC), playing a role in the activation of eukaryotic genes transcribed by RNA polymerase II. Members of the TBP family are differentially required to regulate transcription and development during early embryogenesis. Binds to the promoters of select genes. This Xenopus tropicalis (Western clawed frog) protein is TATA-box-binding protein.